We begin with the raw amino-acid sequence, 290 residues long: Fat storage-inducing transmembrane protein 1 (290 aa).

Residues 1–18 (MERGPVVGAGLGARARIR) are Lumenal-facing. A helical membrane pass occupies residues 19–39 (TLLGCLVKVLLWVASALLYFG). Topologically, residues 40–54 (SEQAARLLGSPCLRR) are cytoplasmic. Residues 55 to 75 (LYHAWLAAVVIFGPLLQFHVN) traverse the membrane as a helical segment. At 76 to 94 (PRTIFASHGNFFNIKFVNS) the chain is on the lumenal side. The chain crosses the membrane as a helical span at residues 95–115 (AWGWTCTFLGGFVLLVVFLAT). Over 116-141 (RRVAVTARHLSRLVVGAAVWRGAGRA) the chain is Cytoplasmic. A helical membrane pass occupies residues 142–162 (FLLIEDLTGSCFEPLPQGLLL). Over 163 to 187 (HELPDRRSRLAAGHQWRGYTVSSHT) the chain is Lumenal. Residue His186 is part of the active site. A helical transmembrane segment spans residues 188 to 208 (FLLTFCCLLMAEEAAVFAKYL). Over 209 to 220 (AHGLPAGAPLRL) the chain is Cytoplasmic. A helical transmembrane segment spans residues 221-241 (VFLLNVLLLGLWNFLLLCTVI). Topologically, residues 242–249 (YFHQYTHK) are lumenal. The active site involves His244. Residues 250–270 (VVGAAVGTFAWYLTYGSWYHQ) form a helical membrane-spanning segment. At 271–290 (PWSPGSPGHGLFTHPSRKHN) the chain is on the cytoplasmic side.

It belongs to the FIT family. FIT1 subfamily.

Its subcellular location is the endoplasmic reticulum membrane. In terms of biological role, plays an important role in the formation of lipid droplets (LDs) which are storage organelles at the center of lipid and energy homeostasis. Directly binds to diacylglycerol (DAGs) and triacylglycerol. The polypeptide is Fat storage-inducing transmembrane protein 1 (Sus scrofa (Pig)).